An 829-amino-acid chain; its full sequence is Cadherin-3 (829 aa).

Positions 1–24 (MGLPRGPLASLLLLQVCWLQCAAS) are cleaved as a signal peptide. A propeptide spanning residues 25 to 107 (EPCRAVFREA…SKRILRRHKR (83 aa)) is cleaved from the precursor. 5 Cadherin domains span residues 108 to 215 (DWVV…KPKF), 216 to 328 (TQDT…APMF), 329 to 440 (DPQK…APVF), 441 to 546 (VPPS…DHGP), and 547 to 650 (VPEP…CPGP). Topologically, residues 108–654 (DWVVAPISVP…ETCPGPWKGG (547 aa)) are extracellular. N-linked (GlcNAc...) asparagine glycosylation is present at Asn-200. Asn-566 is a glycosylation site (N-linked (GlcNAc...) asparagine). The chain crosses the membrane as a helical span at residues 655–677 (FILPVLGAVLALLFLLLVLLLLV). Topologically, residues 678-829 (RKKRKIKEPL…ADMYGGGEDD (152 aa)) are cytoplasmic.

As to quaternary structure, interacts with CDCP1 and CTNNB1. In terms of tissue distribution, expressed in some normal epithelial tissues and in some carcinoma cell lines.

It is found in the cell membrane. Its function is as follows. Cadherins are calcium-dependent cell adhesion proteins. They preferentially interact with themselves in a homophilic manner in connecting cells; cadherins may thus contribute to the sorting of heterogeneous cell types. The chain is Cadherin-3 (CDH3) from Homo sapiens (Human).